The sequence spans 611 residues: Immunoglobulin superfamily member 8 (611 aa).

An N-terminal signal peptide occupies residues 1–25; that stretch reads MGVPSPTPLSSLLLLLLILGTRCYA. 4 consecutive Ig-like C2-type domains span residues 26–143, 160–284, 301–422, and 429–554; these read RQVH…AKVE, PRGR…WVQV, SQLA…EAAS, and PVHV…ADYS. The Extracellular segment spans residues 26–577; sequence RQVHVPRGPL…VYPYTHAVDT (552 aa). A disulfide bond links Cys47 and Cys125. 2 N-linked (GlcNAc...) asparagine glycosylation sites follow: Asn48 and Asn137. Cys184 and Cys268 are oxidised to a cystine. The EWI motif motif lies at 272-274; that stretch reads EWI. 2 cysteine pairs are disulfide-bonded: Cys324–Cys404 and Cys460–Cys542. Residue Asn325 is glycosylated (N-linked (GlcNAc...) asparagine). Position 516 is a phosphoserine (Ser516). The chain crosses the membrane as a helical span at residues 578–598; the sequence is LFVPLLVGTGVALVTGASVLA. The Cytoplasmic segment spans residues 599-611; it reads TITCCFMKRMRKR. S-palmitoyl cysteine attachment occurs at residues Cys602 and Cys603.

In terms of assembly, interacts directly with CD82 and CD9/tetraspanin-29. Also interacts with integrin alpha-3/beta-1 and integrin alpha-4/beta-1. Part of a complex composed of CD9, PTGFRN and CD81. Interacts with CD81/tetraspanin-28. In terms of tissue distribution, expressed in lymphocytes as well as in many tissues with higher expression in brain. Detected in all regions of the brain with weak expression in the pituitary. Expressed selectively by neurons but not by glial cells. Expressed in myoblasts (at protein level).

Its subcellular location is the cell membrane. Functionally, member of the immunoglobulin superfamily (IgSF) that links tetraspanin-enriched microdomains to the actin cytoskeleton and plays several important roles in innate and adaptive immunity. Acts as an inducible receptor of HSPA8 on dendritic cells to enhance the CCL21/SLC-dependent migration of activated mature dendritic cells while attenuating their antigen-specific stimulatory capacities. In complex with alpha-actinins ACTN1 and ACTN4, regulates actin dynamics in the immune synapse and subsequent T-cell activation. Inhibits the entry of several viruses such as hepatitis C Virus (HCV) or HIV-1. Mechanistically, promotes a change in CD81 organization at the plasma membrane by significantly restricting its diffusion which in turn influences CD81 interaction with Claudin-1/CLDN1, preventing CLDN1 from acting as a co-receptor required for HCV entry. Accumulates at the presynaptic terminal, the producer cell side of the virological synapse, to prevent HIV-1 Env-mediated cell-cell fusion. Highly expressed on malignant cells with antigen presentation defects, interacts with NK receptor KLRA9 to suppress NK-cell cytotoxicity. May participate in the regulation of neurite outgrowth and maintenance of the neural network in the adult brain. The sequence is that of Immunoglobulin superfamily member 8 (Igsf8) from Mus musculus (Mouse).